The sequence spans 383 residues: Lipid-A-disaccharide synthase (383 aa).

Belongs to the LpxB family.

It carries out the reaction a lipid X + a UDP-2-N,3-O-bis[(3R)-3-hydroxyacyl]-alpha-D-glucosamine = a lipid A disaccharide + UDP + H(+). It functions in the pathway bacterial outer membrane biogenesis; LPS lipid A biosynthesis. Condensation of UDP-2,3-diacylglucosamine and 2,3-diacylglucosamine-1-phosphate to form lipid A disaccharide, a precursor of lipid A, a phosphorylated glycolipid that anchors the lipopolysaccharide to the outer membrane of the cell. The polypeptide is Lipid-A-disaccharide synthase (Aliivibrio salmonicida (strain LFI1238) (Vibrio salmonicida (strain LFI1238))).